Reading from the N-terminus, the 521-residue chain is Ankyrin repeat domain-containing protein 34B (521 aa).

ANK repeat units follow at residues 9 to 38 (TESNSLIKAVYQSRLRLTRLLLEGGAYINE), 42 to 79 (RGETPLMIACKTKHVDHQSVSKVKMIKYLLENNADPNI), 83 to 113 (FGKTALMHACLENAGAEVVSLLLESGADPSL), and 117 to 146 (TGFSALVYAVNSEDKETLRILLNACKAKGK). Residues 161-188 (QTTRQYLNVPPSPGIEGNNSPSPCTSPS) form a disordered region. The segment covering 177–188 (GNNSPSPCTSPS) has biased composition (polar residues).

It belongs to the ANKRD34 family.

It localises to the cytoplasm. The protein resides in the nucleus. The sequence is that of Ankyrin repeat domain-containing protein 34B (ankrd34b) from Xenopus laevis (African clawed frog).